The sequence spans 291 residues: Aspartate carbamoyltransferase catalytic subunit (291 aa).

The carbamoyl phosphate site is built by Arg47 and Thr48. Residue Lys75 coordinates L-aspartate. The carbamoyl phosphate site is built by Arg97, His126, and Gln129. Arg159 and Arg213 together coordinate L-aspartate. Residues Gly251 and Pro252 each contribute to the carbamoyl phosphate site.

Belongs to the aspartate/ornithine carbamoyltransferase superfamily. ATCase family. As to quaternary structure, heterododecamer (2C3:3R2) of six catalytic PyrB chains organized as two trimers (C3), and six regulatory PyrI chains organized as three dimers (R2).

The catalysed reaction is carbamoyl phosphate + L-aspartate = N-carbamoyl-L-aspartate + phosphate + H(+). The protein operates within pyrimidine metabolism; UMP biosynthesis via de novo pathway; (S)-dihydroorotate from bicarbonate: step 2/3. Functionally, catalyzes the condensation of carbamoyl phosphate and aspartate to form carbamoyl aspartate and inorganic phosphate, the committed step in the de novo pyrimidine nucleotide biosynthesis pathway. The protein is Aspartate carbamoyltransferase catalytic subunit of Aquifex aeolicus (strain VF5).